A 128-amino-acid chain; its full sequence is Glycine cleavage system H protein 2 (128 aa).

One can recognise a Lipoyl-binding domain in the interval 24–105 (TVTVGISDHA…PYSAWIFKVK (82 aa)). Residue lysine 65 is modified to N6-lipoyllysine.

Belongs to the GcvH family. As to quaternary structure, the glycine cleavage system is composed of four proteins: P, T, L and H. The cofactor is (R)-lipoate.

Its function is as follows. The glycine cleavage system catalyzes the degradation of glycine. The H protein shuttles the methylamine group of glycine from the P protein to the T protein. The polypeptide is Glycine cleavage system H protein 2 (Pseudomonas syringae pv. tomato (strain ATCC BAA-871 / DC3000)).